A 746-amino-acid polypeptide reads, in one-letter code: NAD(P)H-quinone oxidoreductase subunit 5, chloroplastic (746 aa).

16 helical membrane-spanning segments follow: residues 9–29, 39–59, 89–109, 125–145, 147–167, 185–205, 222–242, 261–281, 283–303, 330–350, 357–377, 399–419, 428–448, 545–565, 608–628, and 726–746; these read WIIP…LLLV, IWAF…TNLS, IDSL…MVLI, FAYM…PNLI, IYIF…FWFT, GDFG…SFEF, NVLN…GAVA, TPIS…FLVA, LLPL…IGVI, LGYI…FHSI, ALLF…LGYS, ATFL…CFWS, WLYS…TAFY, TMLF…SVGI, IYSV…YGSV, and LFFS…YLYF.

This sequence belongs to the complex I subunit 5 family. NDH is composed of at least 16 different subunits, 5 of which are encoded in the nucleus.

Its subcellular location is the plastid. It is found in the chloroplast thylakoid membrane. The catalysed reaction is a plastoquinone + NADH + (n+1) H(+)(in) = a plastoquinol + NAD(+) + n H(+)(out). The enzyme catalyses a plastoquinone + NADPH + (n+1) H(+)(in) = a plastoquinol + NADP(+) + n H(+)(out). Functionally, NDH shuttles electrons from NAD(P)H:plastoquinone, via FMN and iron-sulfur (Fe-S) centers, to quinones in the photosynthetic chain and possibly in a chloroplast respiratory chain. The immediate electron acceptor for the enzyme in this species is believed to be plastoquinone. Couples the redox reaction to proton translocation, and thus conserves the redox energy in a proton gradient. This is NAD(P)H-quinone oxidoreductase subunit 5, chloroplastic (ndhF) from Amborella trichopoda.